A 290-amino-acid chain; its full sequence is Probable endonuclease 4 (290 aa).

Zn(2+) contacts are provided by His66, His106, Glu143, Asp179, His182, His216, Asp229, His231, and Glu261.

Belongs to the AP endonuclease 2 family. Zn(2+) serves as cofactor.

The catalysed reaction is Endonucleolytic cleavage to 5'-phosphooligonucleotide end-products.. Functionally, endonuclease IV plays a role in DNA repair. It cleaves phosphodiester bonds at apurinic or apyrimidinic (AP) sites, generating a 3'-hydroxyl group and a 5'-terminal sugar phosphate. The sequence is that of Probable endonuclease 4 from Solibacter usitatus (strain Ellin6076).